Reading from the N-terminus, the 320-residue chain is Zinc transporter ZitB (320 aa).

Helical transmembrane passes span 16 to 36, 43 to 63, 85 to 105, 117 to 137, 153 to 173, and 180 to 200; these read LLAA…GGLL, LADA…LVAV, AAFV…WEAI, VPML…FWLL, LHVL…IIIL, and IDPI…WALL.

The protein belongs to the cation diffusion facilitator (CDF) transporter (TC 2.A.4) family. SLC30A subfamily.

The protein resides in the cell inner membrane. Its function is as follows. Involved in zinc efflux across the cytoplasmic membrane, thus reducing zinc accumulation in the cytoplasm and rendering bacteria more resistant to zinc. It may contribute to zinc homeostasis at low concentrations of zinc. In Pectobacterium atrosepticum (strain SCRI 1043 / ATCC BAA-672) (Erwinia carotovora subsp. atroseptica), this protein is Zinc transporter ZitB.